We begin with the raw amino-acid sequence, 246 residues long: Pyridoxine 5'-phosphate synthase (246 aa).

Asparagine 7 contacts 3-amino-2-oxopropyl phosphate. 1-deoxy-D-xylulose 5-phosphate is bound at residue 9 to 10 (DH). Residue arginine 18 coordinates 3-amino-2-oxopropyl phosphate. The Proton acceptor role is filled by histidine 43. Residues arginine 45 and histidine 50 each coordinate 1-deoxy-D-xylulose 5-phosphate. Glutamate 70 serves as the catalytic Proton acceptor. Residue threonine 100 participates in 1-deoxy-D-xylulose 5-phosphate binding. The active-site Proton donor is the histidine 190. 3-amino-2-oxopropyl phosphate contacts are provided by residues glycine 191 and 212–213 (GH).

Belongs to the PNP synthase family. As to quaternary structure, homooctamer; tetramer of dimers.

The protein localises to the cytoplasm. The catalysed reaction is 3-amino-2-oxopropyl phosphate + 1-deoxy-D-xylulose 5-phosphate = pyridoxine 5'-phosphate + phosphate + 2 H2O + H(+). It functions in the pathway cofactor biosynthesis; pyridoxine 5'-phosphate biosynthesis; pyridoxine 5'-phosphate from D-erythrose 4-phosphate: step 5/5. Catalyzes the complicated ring closure reaction between the two acyclic compounds 1-deoxy-D-xylulose-5-phosphate (DXP) and 3-amino-2-oxopropyl phosphate (1-amino-acetone-3-phosphate or AAP) to form pyridoxine 5'-phosphate (PNP) and inorganic phosphate. The polypeptide is Pyridoxine 5'-phosphate synthase (Bordetella petrii (strain ATCC BAA-461 / DSM 12804 / CCUG 43448)).